The primary structure comprises 1673 residues: Protein TIC 214 (1673 aa).

The next 6 helical transmembrane spans lie at 18–38 (IINS…FSIG), 67–87 (FITG…HLAL), 90–110 (PHTI…CNTH), 127–147 (LSIQ…HFIL), 175–195 (VGWI…VVWI), and 218–238 (SMSI…YYLG).

The protein belongs to the TIC214 family. As to quaternary structure, part of the Tic complex.

The protein resides in the plastid. It localises to the chloroplast inner membrane. Its function is as follows. Involved in protein precursor import into chloroplasts. May be part of an intermediate translocation complex acting as a protein-conducting channel at the inner envelope. The protein is Protein TIC 214 of Lactuca sativa (Garden lettuce).